The following is a 101-amino-acid chain: NAD(P)H-quinone oxidoreductase subunit 4L, chloroplastic (101 aa).

3 helical membrane passes run isoleucine 2–isoleucine 22, alanine 30–phenylalanine 52, and isoleucine 61–valine 81.

This sequence belongs to the complex I subunit 4L family. In terms of assembly, NDH is composed of at least 16 different subunits, 5 of which are encoded in the nucleus.

The protein localises to the plastid. Its subcellular location is the chloroplast thylakoid membrane. The enzyme catalyses a plastoquinone + NADH + (n+1) H(+)(in) = a plastoquinol + NAD(+) + n H(+)(out). The catalysed reaction is a plastoquinone + NADPH + (n+1) H(+)(in) = a plastoquinol + NADP(+) + n H(+)(out). In terms of biological role, NDH shuttles electrons from NAD(P)H:plastoquinone, via FMN and iron-sulfur (Fe-S) centers, to quinones in the photosynthetic chain and possibly in a chloroplast respiratory chain. The immediate electron acceptor for the enzyme in this species is believed to be plastoquinone. Couples the redox reaction to proton translocation, and thus conserves the redox energy in a proton gradient. The sequence is that of NAD(P)H-quinone oxidoreductase subunit 4L, chloroplastic from Oenothera glazioviana (Large-flowered evening primrose).